The primary structure comprises 744 residues: Polyadenylate-binding protein, cytoplasmic and nuclear (744 aa).

Polar residues predominate over residues 1-11 (MSEVANSTSPV). Residues 1–42 (MSEVANSTSPVQDGADANGAQINTNVPAASGDAPTPTTAAQQ) form a disordered region. Positions 33–42 (APTPTTAAQQ) are enriched in low complexity. RRM domains lie at 48 to 126 (ASLY…WSQR), 136 to 213 (GNVF…HHIP), 229 to 306 (TNIY…RAQK), and 332 to 462 (VNLY…LAQR). Disordered regions lie at residues 368 to 411 (EEKK…AGDK), 527 to 550 (GRGA…NAQQ), 607 to 651 (IAGG…PGVD), and 723 to 744 (VKNK…EEKA). The segment covering 376–397 (KEVKEEKKEDEKKEDEEAKEGS) has biased composition (basic and acidic residues). 3 stretches are compositionally biased toward gly residues: residues 527-545 (GRGA…GRGG), 609-632 (GGPG…GGRG), and 640-649 (PQGGRPGGPG). In terms of domain architecture, PABC spans 647-724 (GPGVDMSVLS…AMSVYDEYVK (78 aa)).

Belongs to the polyadenylate-binding protein type-1 family.

Its subcellular location is the cytoplasm. It localises to the nucleus. In terms of biological role, binds the poly(A) tail of mRNA. Appears to be an important mediator of the multiple roles of the poly(A) tail in mRNA biogenesis, stability and translation. In the nucleus, involved in both mRNA cleavage and polyadenylation. Is also required for efficient mRNA export to the cytoplasm. Acts in concert with a poly(A)-specific nuclease (PAN) to affect poly(A) tail shortening, which may occur concomitantly with either nucleocytoplasmic mRNA transport or translational initiation. In the cytoplasm, stimulates translation initiation and regulates mRNA decay through translation termination-coupled poly(A) shortening, probably mediated by PAN. This Phaeosphaeria nodorum (strain SN15 / ATCC MYA-4574 / FGSC 10173) (Glume blotch fungus) protein is Polyadenylate-binding protein, cytoplasmic and nuclear (PAB1).